Reading from the N-terminus, the 555-residue chain is MFS-type transporter VdtG (555 aa).

Residues 1-20 (MNGNGTADKPGPPGGKPFGP) are disordered. N-linked (GlcNAc...) asparagine glycosylation occurs at asparagine 4. 3 helical membrane passes run 30–50 (TGFK…LTAL), 71–91 (DIGW…LLFG), and 101–121 (WVFL…GAAP). Residue asparagine 122 is glycosylated (N-linked (GlcNAc...) asparagine). A run of 2 helical transmembrane segments spans residues 132 to 152 (IAGL…FFTV) and 162 to 182 (GIAG…GGGF). A glycan (N-linked (GlcNAc...) asparagine) is linked at asparagine 185. Transmembrane regions (helical) follow at residues 190–210 (WCFY…LLFL), 232–252 (LGNL…QWGG), 262–282 (IVAL…VQLW), and 304–324 (AFTI…PIWF). Asparagine 329 carries an N-linked (GlcNAc...) asparagine glycan. Helical transmembrane passes span 337-357 (VMML…GFII), 364-384 (TPFM…LTTF), 393-413 (WIGY…QASL), 425-445 (PIGI…FLAV), and 497-517 (LMDV…AAAF). The disordered stretch occupies residues 528-555 (AAGPGGPGGPGGPGGPGGPEGLRGGNKV). Over residues 530-555 (GPGGPGGPGGPGGPGGPEGLRGGNKV) the composition is skewed to gly residues.

This sequence belongs to the major facilitator superfamily. TCR/Tet family.

Its subcellular location is the endoplasmic reticulum membrane. Its function is as follows. MFS-type transporter; part of the gene cluster that mediates the biosynthesis of viriditoxin, one of the 'classical' secondary metabolites produced by fungi and that has antibacterial activity. Is not essential for viriditoxin production. This chain is MFS-type transporter VdtG, found in Byssochlamys spectabilis (Paecilomyces variotii).